The chain runs to 324 residues: ATP synthase mitochondrial F1 complex assembly factor 1 (324 aa).

The transit peptide at 1 to 54 (MAAVVSAAGGACPAVLQVAGLYRGLCAVRSRALGLGFVSPAQLRVFPVRRGSGL) directs the protein to the mitochondrion.

It belongs to the ATP11 family. Interacts with ATP5F1B; involved in the assembly of the F1 component of the mitochondrial ATP synthase (ATPase). As to expression, widely expressed but with low level.

The protein localises to the mitochondrion inner membrane. Has a complex stabilizing activity in the assembly of the mitochondrial F1-F0 complex. This chain is ATP synthase mitochondrial F1 complex assembly factor 1, found in Mus musculus (Mouse).